A 148-amino-acid chain; its full sequence is MTKLEDLRPTPGSVKPRKRVGRGIGSGHGKTSGRGHKGQKSRGSGKVHMWLEGGQTPLHRRLPKVGFKSFTHKNYAIVNIRLLEEKFSANDEITPELLLEKGFIKKIKDGVKILGSGELTKPLIVKAHAFSNSAKKAIEMVGGKVEVI.

The disordered stretch occupies residues 1-47; the sequence is MTKLEDLRPTPGSVKPRKRVGRGIGSGHGKTSGRGHKGQKSRGSGKV. A compositionally biased stretch (basic residues) spans 31-45; that stretch reads TSGRGHKGQKSRGSG.

Belongs to the universal ribosomal protein uL15 family. Part of the 50S ribosomal subunit.

Functionally, binds to the 23S rRNA. The chain is Large ribosomal subunit protein uL15 from Pseudothermotoga lettingae (strain ATCC BAA-301 / DSM 14385 / NBRC 107922 / TMO) (Thermotoga lettingae).